Consider the following 237-residue polypeptide: DNA repair protein RecO (237 aa).

The protein belongs to the RecO family.

Involved in DNA repair and RecF pathway recombination. The sequence is that of DNA repair protein RecO from Rickettsia africae (strain ESF-5).